The primary structure comprises 2055 residues: Protein PHOTOPERIOD-INDEPENDENT EARLY FLOWERING 1 (2055 aa).

A disordered region spans residues 1 to 47 (MASKGGKSKPDIVMASKSGKSKPDNESRAKRQKTLEAPKEPRRPKTH). The span at 21–47 (SKPDNESRAKRQKTLEAPKEPRRPKTH) shows a compositional bias: basic and acidic residues. Positions 29–36 (AKRQKTLE) match the Nuclear localization signal 1 motif. Residues 35 to 107 (LEAPKEPRRP…EEQRLRKVAL (73 aa)) enclose the HSA domain. Coiled coils occupy residues 78–147 (LRAS…LEFL) and 229–250 (EEDEKHFTKRERQEELEALQNE). 2 disordered regions span residues 183–332 (KSDE…SNDS) and 340–359 (ETHSHDLEPGMTTASVKSRK). The span at 208–230 (ELDEDYDLKSEDETEDDEDTIEE) shows a compositional bias: acidic residues. 2 stretches are compositionally biased toward basic and acidic residues: residues 231–243 (DEKHFTKRERQEE) and 267–276 (VSRETSPVKD). Residues 392-416 (EEELAKADNEDHVEEIALLQKESEM) are a coiled coil. A disordered region spans residues 432-461 (KDISEDESESSFAVSEDSIVDSDENRQQAD). A Helicase ATP-binding domain is found at 548 to 713 (VTMYEKKLNG…WSLMHFLMPH (166 aa)). ATP is bound at residue 561-568 (DEMGLGKT). Residues 664 to 667 (DEAH) carry the DEAH box motif. The 154-residue stretch at 1076–1229 (KLQELAMLLR…NLVIQNGEYN (154 aa)) folds into the Helicase C-terminal domain. The interval 1293 to 1313 (EEAVDNQEFTEEPVERPEDDE) is disordered. Residues 1419–1492 (FEEKEWELDH…EREAAEVAEM (74 aa)) adopt a coiled-coil conformation. 2 short sequence motifs (nuclear localization signal) span residues 1506-1513 (KKKKKAKK) and 1570-1577 (KKRDLIVD). Residues 1577 to 1597 (DTDEEKTSKKKAKKHKKSLPN) are disordered. Residues 1584–1594 (SKKKAKKHKKS) show a composition bias toward basic residues. One can recognise a Myb-like domain in the interval 1673–1727 (SWLPQEDAILCAMVHEYGPNWNFVSGTLYGMTAGGAYRGRYRHPAYCCERYRELI). Disordered stretches follow at residues 1843–1864 (ALQDSGPSQPDNTISRSRLQET) and 1951–1977 (KSRTGTKAQSLGKHKLSASDSAKSTKS). A compositionally biased stretch (polar residues) spans 1844–1864 (LQDSGPSQPDNTISRSRLQET). Positions 2006–2029 (GDREEEEEQEVDEKANSAEIEMIS) form a coiled coil.

The protein belongs to the SNF2/RAD54 helicase family. SWR1 subfamily. As to quaternary structure, component of the SWR1 chromatin-remodeling complex composed of at least ARP6/ESD1/SUF3, PIE1, SWC6, SWC2 and H2AZs (HTA8, HTA9, HTA11). Interacts (via c-terminus) with SWC6 and ARP6 and (via N-terminus) with H2AZs. In terms of tissue distribution, expressed in ovules, but not in stamens.

The protein resides in the nucleus. It carries out the reaction ATP + H2O = ADP + phosphate + H(+). Functionally, component of the SWR1 complex which mediates the ATP-dependent exchange of histone H2A for the H2A variant H2A.F/Z leading to transcriptional regulation of selected genes (e.g. FLC) by chromatin remodeling. Probable DNA-dependent ATPase. Not involved in the repression of FLC in gametophytes, but required for the reactivation of FLC in early embryos and for the maintenance of full activation of FLC in late embryos. This chain is Protein PHOTOPERIOD-INDEPENDENT EARLY FLOWERING 1 (PIE1), found in Arabidopsis thaliana (Mouse-ear cress).